A 452-amino-acid polypeptide reads, in one-letter code: GTPase Obg (452 aa).

The Obg domain maps to 1–158 (MFIDRAKIYV…KWIVLELKVM (158 aa)). 2 disordered regions span residues 66–87 (GKRG…DKVI) and 117–143 (AEGG…SEDG). The 180-residue stretch at 159–338 (AEVGLIGYPN…LLDFVAEKVA (180 aa)) folds into the OBG-type G domain. Residues 165-172 (GYPNVGKS), 190-194 (FTTLN), 212-215 (DIPG), 282-285 (NKMD), and 319-321 (SAA) contribute to the GTP site. Mg(2+) contacts are provided by serine 172 and threonine 192. The 77-residue stretch at 376–452 (IEEKPKSDFG…KIGNVEFEYQ (77 aa)) folds into the OCT domain.

Belongs to the TRAFAC class OBG-HflX-like GTPase superfamily. OBG GTPase family. As to quaternary structure, monomer. Mg(2+) is required as a cofactor.

The protein localises to the cytoplasm. In terms of biological role, an essential GTPase which binds GTP, GDP and possibly (p)ppGpp with moderate affinity, with high nucleotide exchange rates and a fairly low GTP hydrolysis rate. Plays a role in control of the cell cycle, stress response, ribosome biogenesis and in those bacteria that undergo differentiation, in morphogenesis control. This Natranaerobius thermophilus (strain ATCC BAA-1301 / DSM 18059 / JW/NM-WN-LF) protein is GTPase Obg.